The sequence spans 531 residues: Beta-hexosaminidase subunit beta (531 aa).

The first 21 residues, 1-21, serve as a signal peptide directing secretion; it reads MEVLPGLLRLLAALVVAERWA. Cys67 and Cys111 form a disulfide bridge. N-linked (GlcNAc...) asparagine glycosylation is found at Asn120, Asn164, and Asn301. Intrachain disulfides connect Cys283/Cys334 and Cys508/Cys525. Glu329 (proton donor) is an active-site residue.

It belongs to the glycosyl hydrolase 20 family. There are 3 forms of beta-hexosaminidase: hexosaminidase A is a heterodimer composed of one subunit alpha and one subunit beta (chain A and B); hexosaminidase B is a homodimer of two beta subunits (two chains A and B); hexosaminidase S is a homodimer of two alpha subunits. The composition of the dimer (isozyme A versus isozyme S) has a significant effect on the substrate specificity of the alpha subunit active site.

It localises to the lysosome. Its subcellular location is the cytoplasmic vesicle. The protein resides in the secretory vesicle. It is found in the cortical granule. It carries out the reaction Hydrolysis of terminal non-reducing N-acetyl-D-hexosamine residues in N-acetyl-beta-D-hexosaminides.. The catalysed reaction is N-acetyl-beta-D-galactosaminyl-(1-&gt;4)-beta-D-3-sulfogalactosyl-(1-&gt;4)-beta-D-glucosyl-(1&lt;-&gt;1')-ceramide + H2O = a beta-D-3-sulfogalactosyl-(1-&gt;4)-beta-D-glucosyl-(1&lt;-&gt;1')-ceramide + N-acetyl-beta-D-galactosamine. It catalyses the reaction a ganglioside GM2 (d18:1(4E)) + H2O = a ganglioside GM3 (d18:1(4E)) + N-acetyl-beta-D-galactosamine. The enzyme catalyses a ganglioside GM2 + H2O = a ganglioside GM3 + N-acetyl-beta-D-galactosamine. It carries out the reaction beta-D-GalNAc-(1-&gt;4)-alpha-L-IdoA-(1-&gt;3)-beta-D-GalNAc-4-sulfate-(1-&gt;4)-alpha-L-IdoA-(1-&gt;3)-D-GalNAc-4-sulfate + H2O = alpha-L-IdoA-(1-&gt;3)-beta-D-GalNAc-4-sulfate-(1-&gt;4)-alpha-L-IdoA-(1-&gt;3)-D-GalNAc-4-sulfate + N-acetyl-D-galactosamine. The catalysed reaction is N-acetyl-beta-D-6-sulfogalactosaminyl-(1-&gt;4)-alpha-L-iduronyl-(1-&gt;3)-N-acetyl-D-6-sulfogalactosamine + H2O = alpha-L-iduronyl-(1-&gt;3)-N-acetyl-D-6-sulfogalactosamine + N-acetyl-D-6-sulfogalactosamine. Its activity is regulated as follows. Addition of GM2A stimulates the hydrolysis of sulfated glycosphingolipid SM2 and the ganglioside GM2. Its function is as follows. Hydrolyzes the non-reducing end N-acetyl-D-hexosamine and/or sulfated N-acetyl-D-hexosamine of glycoconjugates, such as the oligosaccharide moieties from proteins and neutral glycolipids, or from certain mucopolysaccharides. The isozyme B does not hydrolyze each of these substrates, however hydrolyzes efficiently neutral oligosaccharide. Only the isozyme A is responsible for the degradation of GM2 gangliosides in the presence of GM2A. During fertilization is responsible, at least in part, for the zona block to polyspermy. Present in the cortical granules of non-activated oocytes, is exocytosed during the cortical reaction in response to oocyte activation and inactivates the sperm galactosyltransferase-binding site, accounting for the block in sperm binding to the zona pellucida. This Sus scrofa (Pig) protein is Beta-hexosaminidase subunit beta.